Reading from the N-terminus, the 492-residue chain is MDPSKYRPSSAYDTPFLTTNAGGPVYNNVSSLTVGPRGPVLLEDYYLIEKLATFDREKIPERVVHARGASAKGFFEVTHDISHLTCADFLRAPGAQTPVICRFSTVVHERGSPESIRDIRGFGVKFYNRGGNFDLVGNNVPVFFNRDAKSFPDTIRALKPNPKSHIQEDWRTLDFFSFLPESLHTFAFFYDDVCLPTDYRHMEGFGVHAYQLINKEGKAHYVKFHWKPTCGVKCMSEEEAIRVGGTNHSHATKDLYDSIAAGNYPEWKLFIQTMDPEDVDKFDFDPLDVTKTWPEDLLPLIPVGRLVLNRNIDNFFAENEQLAFNPGHIVPGIYYSEDKLLQTRIFAYADTQRHRIGPNYMQLPVNAPKCGHHNNHRDGAMNMTHRDEEVDYFPSRFDPCRPAEQYPIPACVLNGRRTNCVIPKENNSKQAGERYRSWESDRQDRYINKWVESLSDPRVTHEIRSIWISYLSQADKSCGQKVASRLTVKPTM.

Active-site residues include histidine 65 and asparagine 138. Residue tyrosine 348 coordinates heme.

This sequence belongs to the catalase family. In terms of assembly, homotetramer. Requires heme as cofactor.

Its subcellular location is the peroxisome. The protein resides in the glyoxysome. It catalyses the reaction 2 H2O2 = O2 + 2 H2O. In terms of biological role, occurs in almost all aerobically respiring organisms and serves to protect cells from the toxic effects of hydrogen peroxide. This chain is Catalase isozyme 1 (CAT1), found in Solanum tuberosum (Potato).